The following is a 494-amino-acid chain: Rho GTPase-activating protein 19 (494 aa).

Residue A2 is modified to N-acetylalanine. Phosphoserine is present on residues S7 and S31. The Rho-GAP domain occupies 102 to 308 (MSLKRKEKGV…FMIKHSQKLF (207 aa)). 2 disordered regions span residues 349 to 368 (KSQK…TQHH) and 399 to 421 (QSLT…ARSR). The segment covering 354-368 (NRVDSCPHQEETQHH) has biased composition (basic and acidic residues). Residues 399–415 (QSLTQTPGREPSTSQVQ) are compositionally biased toward polar residues. 3 positions are modified to phosphoserine: S422, S438, and S470. T478 is subject to Phosphothreonine.

As to expression, strong expression in fetal heart, brain, placenta, lung, liver, skeletal muscle, kidney and pancreas. Weak expression in adult pancreas, spleen, thymus, and ovary.

It localises to the nucleus. Functionally, GTPase activator for the Rho-type GTPases by converting them to an inactive GDP-bound state. This chain is Rho GTPase-activating protein 19 (ARHGAP19), found in Homo sapiens (Human).